A 547-amino-acid chain; its full sequence is Alpha-humulene/(-)-(E)-beta-caryophyllene synthase (547 aa).

Residues R262, D299, D303, R442, and D445 each contribute to the (2E,6E)-farnesyl diphosphate site. Residues D299 and D303 each contribute to the Mg(2+) site. The DDXXD motif signature appears at 299 to 303 (DDMYD). Mg(2+) contacts are provided by D445, D446, S449, and E453.

Belongs to the terpene synthase family. Tpsa subfamily. In terms of assembly, monomer. Requires Mg(2+) as cofactor. Mn(2+) is required as a cofactor. Expressed exclusively in flowers. Expressed in the flower stigmata and also detected in the mesocarp cell layers of the silique wall.

Its subcellular location is the cytoplasm. The catalysed reaction is (2E,6E)-farnesyl diphosphate = (-)-(E)-beta-caryophyllene + diphosphate. It catalyses the reaction (2E,6E)-farnesyl diphosphate = alpha-copaene + diphosphate. The enzyme catalyses (2E,6E)-farnesyl diphosphate = alpha-humulene + diphosphate. It carries out the reaction (2E,6E)-farnesyl diphosphate = (1S,2S,4R)-beta-elemene + diphosphate. Its pathway is secondary metabolite biosynthesis; terpenoid biosynthesis. Involved in sesquiterpene (C15) biosynthesis. The major products are beta-caryophyllene and alpha-humulene. Does not convert geranyl diphosphate (GPP) to any monoterpenes. The protein is Alpha-humulene/(-)-(E)-beta-caryophyllene synthase of Arabidopsis thaliana (Mouse-ear cress).